A 540-amino-acid polypeptide reads, in one-letter code: Acetyl-coenzyme A carboxylase carboxyl transferase subunit beta, chloroplastic (540 aa).

Residues Y229–Y249 form a disordered region. Over residues G233–S248 the composition is skewed to low complexity. A CoA carboxyltransferase N-terminal domain is found at L267–V538. Zn(2+) is bound by residues C271, C274, C290, and C293. A C4-type zinc finger spans residues C271–C293.

Belongs to the AccD/PCCB family. Acetyl-CoA carboxylase is a heterohexamer composed of biotin carboxyl carrier protein, biotin carboxylase and 2 subunits each of ACCase subunit alpha and ACCase plastid-coded subunit beta (accD). Zn(2+) serves as cofactor.

It is found in the plastid. It localises to the chloroplast stroma. The enzyme catalyses N(6)-carboxybiotinyl-L-lysyl-[protein] + acetyl-CoA = N(6)-biotinyl-L-lysyl-[protein] + malonyl-CoA. It functions in the pathway lipid metabolism; malonyl-CoA biosynthesis; malonyl-CoA from acetyl-CoA: step 1/1. In terms of biological role, component of the acetyl coenzyme A carboxylase (ACC) complex. Biotin carboxylase (BC) catalyzes the carboxylation of biotin on its carrier protein (BCCP) and then the CO(2) group is transferred by the transcarboxylase to acetyl-CoA to form malonyl-CoA. This chain is Acetyl-coenzyme A carboxylase carboxyl transferase subunit beta, chloroplastic, found in Amborella trichopoda.